Consider the following 557-residue polypeptide: 2-succinyl-5-enolpyruvyl-6-hydroxy-3-cyclohexene-1-carboxylate synthase (557 aa).

Belongs to the TPP enzyme family. MenD subfamily. Homodimer. Mg(2+) serves as cofactor. Requires Mn(2+) as cofactor. Thiamine diphosphate is required as a cofactor.

It carries out the reaction isochorismate + 2-oxoglutarate + H(+) = 5-enolpyruvoyl-6-hydroxy-2-succinyl-cyclohex-3-ene-1-carboxylate + CO2. The protein operates within quinol/quinone metabolism; 1,4-dihydroxy-2-naphthoate biosynthesis; 1,4-dihydroxy-2-naphthoate from chorismate: step 2/7. It functions in the pathway quinol/quinone metabolism; menaquinone biosynthesis. In terms of biological role, catalyzes the thiamine diphosphate-dependent decarboxylation of 2-oxoglutarate and the subsequent addition of the resulting succinic semialdehyde-thiamine pyrophosphate anion to isochorismate to yield 2-succinyl-5-enolpyruvyl-6-hydroxy-3-cyclohexene-1-carboxylate (SEPHCHC). The protein is 2-succinyl-5-enolpyruvyl-6-hydroxy-3-cyclohexene-1-carboxylate synthase of Staphylococcus aureus (strain MRSA252).